Consider the following 324-residue polypeptide: Alkanal monooxygenase beta chain (324 aa).

The protein belongs to the bacterial luciferase oxidoreductase family. As to quaternary structure, heterodimer of an alpha and a beta chain.

It carries out the reaction a long-chain fatty aldehyde + FMNH2 + O2 = a long-chain fatty acid + hnu + FMN + H2O + 2 H(+). Light-emitting reaction in luminous bacteria. The specific role of the beta subunit is unknown, but it is absolutely required for bioluminescence activity. The protein is Alkanal monooxygenase beta chain (luxB) of Vibrio harveyi (Beneckea harveyi).